The sequence spans 503 residues: Maturase K (503 aa).

Belongs to the intron maturase 2 family. MatK subfamily.

The protein localises to the plastid. Its subcellular location is the chloroplast. Usually encoded in the trnK tRNA gene intron. Probably assists in splicing its own and other chloroplast group II introns. The polypeptide is Maturase K (Liquidambar styraciflua (Sweetgum tree)).